Consider the following 291-residue polypeptide: Undecaprenyl-diphosphatase (291 aa).

The next 8 helical transmembrane spans lie at 1–21, 48–68, 102–122, 126–146, 162–182, 203–223, 231–251, and 267–287; these read MFII…LTEF, SAFT…AWVF, LHVL…DDFI, LFSV…MIIA, INYF…WPGF, SDFT…LSLL, IADI…GLIA, and FAIY…GFGI.

This sequence belongs to the UppP family.

It localises to the cell membrane. The catalysed reaction is di-trans,octa-cis-undecaprenyl diphosphate + H2O = di-trans,octa-cis-undecaprenyl phosphate + phosphate + H(+). Its function is as follows. Catalyzes the dephosphorylation of undecaprenyl diphosphate (UPP). Confers resistance to bacitracin. The chain is Undecaprenyl-diphosphatase from Staphylococcus aureus (strain Mu3 / ATCC 700698).